Here is a 335-residue protein sequence, read N- to C-terminus: DNA-directed RNA polymerase subunit alpha (335 aa).

Residues M1–K231 are alpha N-terminal domain (alpha-NTD). The interval K263–F335 is alpha C-terminal domain (alpha-CTD).

Belongs to the RNA polymerase alpha chain family. In terms of assembly, in plastids the minimal PEP RNA polymerase catalytic core is composed of four subunits: alpha, beta, beta', and beta''. When a (nuclear-encoded) sigma factor is associated with the core the holoenzyme is formed, which can initiate transcription.

It localises to the plastid. The protein resides in the chloroplast. The catalysed reaction is RNA(n) + a ribonucleoside 5'-triphosphate = RNA(n+1) + diphosphate. DNA-dependent RNA polymerase catalyzes the transcription of DNA into RNA using the four ribonucleoside triphosphates as substrates. The sequence is that of DNA-directed RNA polymerase subunit alpha from Helianthus annuus (Common sunflower).